The chain runs to 71 residues: Prokaryotic ubiquitin-like protein Pup (71 aa).

Residues 1–18 (MATRDSGGQSQTGRSQQG) are compositionally biased toward low complexity. The tract at residues 1-42 (MATRDSGGQSQTGRSQQGEEIEDVTTEASAEAAERHAEITED) is disordered. Residues 27 to 65 (EASAEAAERHAEITEDVDDLLDEIDSVLEENAEEFVRGY) form an ARC ATPase binding region. A coiled-coil region spans residues 29-60 (SAEAAERHAEITEDVDDLLDEIDSVLEENAEE). E71 is covalently cross-linked (Isoglutamyl lysine isopeptide (Glu-Lys) (interchain with K-? in acceptor proteins)).

This sequence belongs to the prokaryotic ubiquitin-like protein family. Strongly interacts with the proteasome-associated ATPase ARC through a hydrophobic interface; the interacting region of Pup lies in its C-terminal half. There is one Pup binding site per ARC hexamer ring.

It participates in protein degradation; proteasomal Pup-dependent pathway. Functionally, protein modifier that is covalently attached to lysine residues of substrate proteins, thereby targeting them for proteasomal degradation. The tagging system is termed pupylation. The polypeptide is Prokaryotic ubiquitin-like protein Pup (Salinispora tropica (strain ATCC BAA-916 / DSM 44818 / JCM 13857 / NBRC 105044 / CNB-440)).